The following is a 1529-amino-acid chain: MDKNNNNNNSNGGHENLFKDLQNQKRVQNPSFSSGQSRTVPSISARGVAPISSSSSSSSISTTNNTTTTTTSGTGSTSSPVSKGVPLIPIGASRFKQQPSTDVWRSARGQQLSESLWSSFKQALQNSQNSQQSLSQSLSQSHSTNSEINNILLEFVKHYNSEYDKWNVEMGVDYANTKVYGIKLYCTPVLDIQTTLYLTRQLCSYVLNLSKALTDDNLDIPDGLHFICLINILSRSPLNSTLLHQENALAHPFQAARLASYKLSSFRDKNNPSFTKWWPYLKVLLANCCQIATNFVHDKQNLSFNSLRYGNVNNNNNSNNNNNIVNSTSLSSGSLLSNGGGISTSEPEISPSTSPLTGTTPTSPSSSWSSSSITNHQIQHQILMQQQQQQQAQQQHTQQYFNTIGQSSSYSYTNVINGVSTNNSTITATTTSNFLIQHIFKLGTISILMDSLQFFNDFFKTLQPKDSEDSFRLLIIDTLGILISGNGGLTTTTTTTTTTTTTTATSTNTTPNTIINNTTINNSGLTNSINNNNGGNNNLNKLKEPGNEIKTIINCIGMKAYIKTSKKVTSLQNEFQFQLHVIRVIKELISNNLNNAKYFNSHRGFEKIQEVILWVTQCFKPTDSHTFTDESCLDFDTSMPAQELSALLIGATSSNSSNNLPNLTNSISSPSHSSSSSSSTTTNINNSNNNTATATTTTSNVIIPPTMYDSLNSVLNSLKYTTYSEKSSSLIKSPPIIVKRSKVVQLSQLFQVLHSFSFTLVPFSKIQTNSSSSSGNLNYNIYSSSSASFINNNNNNNNCNISSPTNQSVNNNNNNNNNNNNNNNNNNNNNNNNVLPRSNSSYSIFRRGDSLNTIIDINQDNNNSNSNSNNSSTLDILNNSQDTIVDNNNGSNIDFEATITTNTTTVVTATVNLTNNNNNNNNNNNNMIDGNTEVTGGSAHNSWSSYTNINEQFQQLSLTSSTTATGSSPTSPTAFQYQSKPIDKMFVNTLLIETIFEKLFSQLNLSALNENHSTTSSLPISQNLSDDSSNTNTNNNNTSFGKIYISDNLQQNPNTDKSLSCGKIFNKIKNSTPELQLQIIEYLIKLVIENPYCLPILRRFNLWELIFSDNFYYSSPQATLNDDDIEYLLNSTTTTTTSSSTNISEEQLKKRKLYLFNGLRLGCLGLIQFFSTFNNRDNFEEICIILTEMRKSLLKSPASVIELCQLLINITKSNPQGTIQSLIKLRIFQQIPQMIQVLFKYEQASNSQFGLLHKKARNIIFSYLGQLIVHEELSYHAVVEKELIDVLFLLLRKVETKTFSITQIFFLMKLNVSSSSPSVTTLLSSSSQVLNSYQQQQQQPQQQSSQPQQQSSQPQQIPQSQLQQQNQTQSLQSSSLSSTSLLLTSQHQQPSTSLLSTSQFSSSSSLLQQQQQQQQQQQQQQQQQQQQQQQQQQQQPQLLQQTQQQQQQQQQQQQQQVQTPSSPQTLASLLGNSSSNTLTSSSSTLSLNESSTLSRLPTSNNLSELYRTYISELSMIKEETSCTYDFKFD.

The span at 1–11 (MDKNNNNNNSN) shows a compositional bias: low complexity. Disordered regions lie at residues 1 to 85 (MDKN…SKGV), 335 to 371 (LLSNGGGISTSEPEISPSTSPLTGTTPTSPSSSWSSS), 660 to 694 (LPNLTNSISSPSHSSSSSSSTTTNINNSNNNTATA), 798 to 843 (NCNI…SSYS), 1016 to 1035 (SSLPISQNLSDDSSNTNTNN), 1334 to 1364 (QQQQQQPQQQSSQPQQQSSQPQQIPQSQLQQ), and 1454 to 1497 (QQQV…SRLP). A compositionally biased stretch (polar residues) spans 24 to 42 (QKRVQNPSFSSGQSRTVPS). Residues 51–79 (ISSSSSSSSISTTNNTTTTTTSGTGSTSS) show a composition bias toward low complexity. A compositionally biased stretch (low complexity) spans 810-833 (NNNNNNNNNNNNNNNNNNNNNNNN). Composition is skewed to polar residues over residues 834–843 (VLPRSNSSYS) and 1016–1027 (SSLPISQNLSDD). A compositionally biased stretch (low complexity) spans 1454–1494 (QQQVQTPSSPQTLASLLGNSSSNTLTSSSSTLSLNESSTLS).

This is an uncharacterized protein from Dictyostelium discoideum (Social amoeba).